The chain runs to 868 residues: Translation initiation factor IF-2 (868 aa).

Disordered stretches follow at residues 158–178 (VKEEEKINSEENTAESQDELT) and 200–269 (KKEE…KYRE). Residues 200–209 (KKEEVKPEKV) show a composition bias toward basic and acidic residues. A compositionally biased stretch (basic residues) spans 249–260 (RGGRSKFKKKKG). The tr-type G domain occupies 368–537 (GRAPVVTIMG…LLQSEVLELK (170 aa)). A G1 region spans residues 377 to 384 (GHVDHGKT). Residue 377-384 (GHVDHGKT) participates in GTP binding. The tract at residues 402–406 (GITQH) is G2. The segment at 423–426 (DTPG) is G3. Residues 423-427 (DTPGH) and 477-480 (NKMD) each bind GTP. The interval 477 to 480 (NKMD) is G4. Positions 513–515 (SAK) are G5.

The protein belongs to the TRAFAC class translation factor GTPase superfamily. Classic translation factor GTPase family. IF-2 subfamily.

Its subcellular location is the cytoplasm. Its function is as follows. One of the essential components for the initiation of protein synthesis. Protects formylmethionyl-tRNA from spontaneous hydrolysis and promotes its binding to the 30S ribosomal subunits. Also involved in the hydrolysis of GTP during the formation of the 70S ribosomal complex. The protein is Translation initiation factor IF-2 of Legionella pneumophila (strain Lens).